We begin with the raw amino-acid sequence, 256 residues long: 5'-nucleotidase SurE (256 aa).

A divalent metal cation contacts are provided by aspartate 9, aspartate 10, serine 42, and asparagine 95.

This sequence belongs to the SurE nucleotidase family. The cofactor is a divalent metal cation.

It is found in the cytoplasm. It carries out the reaction a ribonucleoside 5'-phosphate + H2O = a ribonucleoside + phosphate. In terms of biological role, nucleotidase that shows phosphatase activity on nucleoside 5'-monophosphates. The polypeptide is 5'-nucleotidase SurE (Campylobacter curvus (strain 525.92)).